A 940-amino-acid polypeptide reads, in one-letter code: UvrABC system protein A (940 aa).

G31–S38 contributes to the ATP binding site. The C4-type zinc-finger motif lies at C252–C279. ABC transporter domains are found at residues W309–L586 and R606–K936. G639–S646 lines the ATP pocket. The C4-type zinc finger occupies C739–C765.

Belongs to the ABC transporter superfamily. UvrA family. Forms a heterotetramer with UvrB during the search for lesions.

The protein localises to the cytoplasm. In terms of biological role, the UvrABC repair system catalyzes the recognition and processing of DNA lesions. UvrA is an ATPase and a DNA-binding protein. A damage recognition complex composed of 2 UvrA and 2 UvrB subunits scans DNA for abnormalities. When the presence of a lesion has been verified by UvrB, the UvrA molecules dissociate. The chain is UvrABC system protein A from Vibrio parahaemolyticus serotype O3:K6 (strain RIMD 2210633).